The chain runs to 334 residues: N-acetyl-gamma-glutamyl-phosphate reductase (334 aa).

Cys-154 is a catalytic residue.

It belongs to the NAGSA dehydrogenase family. Type 1 subfamily.

The protein resides in the cytoplasm. It carries out the reaction N-acetyl-L-glutamate 5-semialdehyde + phosphate + NADP(+) = N-acetyl-L-glutamyl 5-phosphate + NADPH + H(+). It functions in the pathway amino-acid biosynthesis; L-arginine biosynthesis; N(2)-acetyl-L-ornithine from L-glutamate: step 3/4. Functionally, catalyzes the NADPH-dependent reduction of N-acetyl-5-glutamyl phosphate to yield N-acetyl-L-glutamate 5-semialdehyde. The protein is N-acetyl-gamma-glutamyl-phosphate reductase of Aliivibrio fischeri (strain ATCC 700601 / ES114) (Vibrio fischeri).